The chain runs to 570 residues: NADH-ubiquinone oxidoreductase chain 5 (570 aa).

16 consecutive transmembrane segments (helical) span residues 2–22 (FSFF…FKHF), 27–47 (GVFL…LSNL), 56–76 (LIAI…VNFS), 77–97 (FYID…GVFV), 109–129 (PHIS…IILV), 134–154 (LVVF…LINF), 179–199 (VLIA…EAIL), 221–241 (LISF…GFHV), 251–271 (VPAS…FLIM), 285–305 (LVTA…AVFQ), 311–330 (ILAY…CSFG), 335–357 (VIVY…GNLI), 380–400 (FFFL…FGFY), 417–437 (AIFC…FNIL), 476–496 (IFLL…FYLL), and 524–544 (LLNY…LVLF).

The protein belongs to the complex I subunit 5 family.

It is found in the mitochondrion inner membrane. It catalyses the reaction a ubiquinone + NADH + 5 H(+)(in) = a ubiquinol + NAD(+) + 4 H(+)(out). Core subunit of the mitochondrial membrane respiratory chain NADH dehydrogenase (Complex I) that is believed to belong to the minimal assembly required for catalysis. Complex I functions in the transfer of electrons from NADH to the respiratory chain. The immediate electron acceptor for the enzyme is believed to be ubiquinone. The protein is NADH-ubiquinone oxidoreductase chain 5 (ND5) of Paramecium tetraurelia.